Here is a 40-residue protein sequence, read N- to C-terminus: Photosystem II reaction center protein Y (40 aa).

Residues Leu-5–Ile-23 traverse the membrane as a helical segment.

This sequence belongs to the PsbY family. PSII is composed of 1 copy each of membrane proteins PsbA, PsbB, PsbC, PsbD, PsbE, PsbF, PsbH, PsbI, PsbJ, PsbK, PsbL, PsbM, PsbT, PsbX, PsbY, PsbZ, Psb30/Ycf12, peripheral proteins PsbO, CyanoQ (PsbQ), PsbU, PsbV and a large number of cofactors. It forms dimeric complexes.

The protein localises to the cellular thylakoid membrane. Loosely associated component of the core of photosystem II (PSII), it is not always seen in crystals. PSII is a light-driven water plastoquinone oxidoreductase, using light energy to abstract electrons from H(2)O, generating a proton gradient subsequently used for ATP formation. This Synechococcus elongatus (strain ATCC 33912 / PCC 7942 / FACHB-805) (Anacystis nidulans R2) protein is Photosystem II reaction center protein Y.